Reading from the N-terminus, the 307-residue chain is MFNGEPGPASAGASRNVVRSSSISGEICGSQQAGGGAGTTTAKKRRSSLGAKMVAIVGLTQWSKSTLQLPQPEGATKKLRSNIRRSTETGIAVEMRSRVTRQGSRESTDGSTNSNSSEGTFIFPTRLGAESQFSDFLDGLGPAQIVGRQTLATPPMGDVHIAIMDRSGQLEVEVIEARGLTPKPGSKSLPATYIKAYLLENGACVAKKKTKVAKKTCDPLYQQALLFDEGPQGKVLQVIVWGDYGRMDHKCFMGMAQIMLDELDLSAVVTGWYKFFPTSSVADSTLGSLTRRLSQSSLESATSPSCS.

A disordered region spans residues 86 to 120; that stretch reads STETGIAVEMRSRVTRQGSRESTDGSTNSNSSEGT. Positions 109–119 are enriched in polar residues; that stretch reads DGSTNSNSSEG. The C2 domain maps to 155–273; sequence PMGDVHIAIM…DLSAVVTGWY (119 aa). Phosphoserine occurs at positions 294 and 297.

Binds PPFIA3. Does not bind RAB3. Expressed exclusively in brain with significant levels in cortex, cerebellum and olfactory bulb. Detected at lower level in hippocampus.

The protein resides in the synapse. In terms of biological role, regulates synaptic membrane exocytosis. The polypeptide is Regulating synaptic membrane exocytosis protein 3 (Rims3) (Rattus norvegicus (Rat)).